A 191-amino-acid polypeptide reads, in one-letter code: uncharacterized protein (191 aa).

Residues asparagine 52–asparagine 112 form a disordered region. A compositionally biased stretch (polar residues) spans glutamine 57–valine 70. Positions aspartate 71–asparagine 94 are enriched in low complexity. Residues glutamine 138–serine 172 adopt a coiled-coil conformation.

This is an uncharacterized protein from Acanthamoeba polyphaga mimivirus (APMV).